An 832-amino-acid polypeptide reads, in one-letter code: Translation initiation factor IF-2 (832 aa).

The span at 1–10 (MLMSDVEKFG) shows a compositional bias: basic and acidic residues. Disordered stretches follow at residues 1-87 (MLMS…SRSA), 120-148 (RDEE…PAAA), and 163-201 (IAPG…GGGG). Residues 11–20 (GDCGSSGGSG) are compositionally biased toward gly residues. Polar residues-rich tracts occupy residues 29-42 (RAST…STGG) and 71-87 (SPYT…SRSA). Positions 331–500 (PRPPVVTVMG…LLLAEMLELR (170 aa)) constitute a tr-type G domain. A G1 region spans residues 340 to 347 (GHVDHGKT). 340 to 347 (GHVDHGKT) is a GTP binding site. The G2 stretch occupies residues 365–369 (GITQH). The tract at residues 386–389 (DTPG) is G3. GTP contacts are provided by residues 386–390 (DTPGH) and 440–443 (NKID). Residues 440–443 (NKID) form a G4 region. Residues 476-478 (SAK) are G5.

The protein belongs to the TRAFAC class translation factor GTPase superfamily. Classic translation factor GTPase family. IF-2 subfamily.

It localises to the cytoplasm. One of the essential components for the initiation of protein synthesis. Protects formylmethionyl-tRNA from spontaneous hydrolysis and promotes its binding to the 30S ribosomal subunits. Also involved in the hydrolysis of GTP during the formation of the 70S ribosomal complex. The sequence is that of Translation initiation factor IF-2 from Anaplasma marginale (strain St. Maries).